A 336-amino-acid chain; its full sequence is Phosphate acyltransferase (336 aa).

This sequence belongs to the PlsX family. As to quaternary structure, homodimer. Probably interacts with PlsY.

The protein resides in the cytoplasm. It carries out the reaction a fatty acyl-[ACP] + phosphate = an acyl phosphate + holo-[ACP]. The protein operates within lipid metabolism; phospholipid metabolism. Functionally, catalyzes the reversible formation of acyl-phosphate (acyl-PO(4)) from acyl-[acyl-carrier-protein] (acyl-ACP). This enzyme utilizes acyl-ACP as fatty acyl donor, but not acyl-CoA. This Pseudomonas fluorescens (strain ATCC BAA-477 / NRRL B-23932 / Pf-5) protein is Phosphate acyltransferase.